Reading from the N-terminus, the 453-residue chain is Bestrophin homolog 5 (453 aa).

4 consecutive transmembrane segments (helical) span residues 78–98, 113–133, 275–295, and 314–334; these read ELIV…FALT, DARM…NIII, IPLM…FLCI, and LYIP…LKVA.

It belongs to the anion channel-forming bestrophin (TC 1.A.46) family. Calcium-sensitive chloride channel subfamily. As to quaternary structure, forms oligomers.

The protein localises to the cell membrane. Functionally, forms chloride channels. This Caenorhabditis elegans protein is Bestrophin homolog 5 (best-5).